The following is a 246-amino-acid chain: Ribonuclease PH (246 aa).

Phosphate is bound by residues arginine 91 and 129-131; that span reads GTR.

This sequence belongs to the RNase PH family. Homohexameric ring arranged as a trimer of dimers.

It catalyses the reaction tRNA(n+1) + phosphate = tRNA(n) + a ribonucleoside 5'-diphosphate. Functionally, phosphorolytic 3'-5' exoribonuclease that plays an important role in tRNA 3'-end maturation. Removes nucleotide residues following the 3'-CCA terminus of tRNAs; can also add nucleotides to the ends of RNA molecules by using nucleoside diphosphates as substrates, but this may not be physiologically important. Probably plays a role in initiation of 16S rRNA degradation (leading to ribosome degradation) during starvation. This chain is Ribonuclease PH, found in Burkholderia ambifaria (strain MC40-6).